The primary structure comprises 613 residues: Dihydroxy-acid dehydratase (613 aa).

D81 contacts Mg(2+). C122 is a [2Fe-2S] cluster binding site. Residues D123 and K124 each coordinate Mg(2+). At K124 the chain carries N6-carboxylysine. C193 contributes to the [2Fe-2S] cluster binding site. E489 lines the Mg(2+) pocket. The active-site Proton acceptor is the S515.

Belongs to the IlvD/Edd family. As to quaternary structure, homodimer. Requires [2Fe-2S] cluster as cofactor. Mg(2+) is required as a cofactor.

The catalysed reaction is (2R)-2,3-dihydroxy-3-methylbutanoate = 3-methyl-2-oxobutanoate + H2O. It catalyses the reaction (2R,3R)-2,3-dihydroxy-3-methylpentanoate = (S)-3-methyl-2-oxopentanoate + H2O. Its pathway is amino-acid biosynthesis; L-isoleucine biosynthesis; L-isoleucine from 2-oxobutanoate: step 3/4. It participates in amino-acid biosynthesis; L-valine biosynthesis; L-valine from pyruvate: step 3/4. Functions in the biosynthesis of branched-chain amino acids. Catalyzes the dehydration of (2R,3R)-2,3-dihydroxy-3-methylpentanoate (2,3-dihydroxy-3-methylvalerate) into 2-oxo-3-methylpentanoate (2-oxo-3-methylvalerate) and of (2R)-2,3-dihydroxy-3-methylbutanoate (2,3-dihydroxyisovalerate) into 2-oxo-3-methylbutanoate (2-oxoisovalerate), the penultimate precursor to L-isoleucine and L-valine, respectively. The protein is Dihydroxy-acid dehydratase of Pseudomonas putida (strain ATCC 47054 / DSM 6125 / CFBP 8728 / NCIMB 11950 / KT2440).